Reading from the N-terminus, the 216-residue chain is Uridine kinase (216 aa).

16-23 contributes to the ATP binding site; the sequence is GASASGKS.

This sequence belongs to the uridine kinase family.

Its subcellular location is the cytoplasm. The enzyme catalyses uridine + ATP = UMP + ADP + H(+). The catalysed reaction is cytidine + ATP = CMP + ADP + H(+). Its pathway is pyrimidine metabolism; CTP biosynthesis via salvage pathway; CTP from cytidine: step 1/3. It functions in the pathway pyrimidine metabolism; UMP biosynthesis via salvage pathway; UMP from uridine: step 1/1. This Mannheimia succiniciproducens (strain KCTC 0769BP / MBEL55E) protein is Uridine kinase.